Reading from the N-terminus, the 294-residue chain is Diaminopimelate epimerase (294 aa).

Substrate contacts are provided by Asn13, Gln46, and Asn69. Residue Cys78 is the Proton donor of the active site. Substrate-binding positions include 79-80, Asn173, Asn206, and 224-225; these read GN and ER. The Proton acceptor role is filled by Cys233. 234–235 contacts substrate; it reads GT.

The protein belongs to the diaminopimelate epimerase family. As to quaternary structure, homodimer.

Its subcellular location is the cytoplasm. It catalyses the reaction (2S,6S)-2,6-diaminopimelate = meso-2,6-diaminopimelate. The protein operates within amino-acid biosynthesis; L-lysine biosynthesis via DAP pathway; DL-2,6-diaminopimelate from LL-2,6-diaminopimelate: step 1/1. Catalyzes the stereoinversion of LL-2,6-diaminopimelate (L,L-DAP) to meso-diaminopimelate (meso-DAP), a precursor of L-lysine and an essential component of the bacterial peptidoglycan. The chain is Diaminopimelate epimerase from Variovorax paradoxus (strain S110).